The primary structure comprises 85 residues: Cell division topological specificity factor (85 aa).

Belongs to the MinE family.

In terms of biological role, prevents the cell division inhibition by proteins MinC and MinD at internal division sites while permitting inhibition at polar sites. This ensures cell division at the proper site by restricting the formation of a division septum at the midpoint of the long axis of the cell. This is Cell division topological specificity factor from Xylella fastidiosa (strain M23).